We begin with the raw amino-acid sequence, 761 residues long: Hyperosmolality-gated Ca2+ permeable channel 1.6 (761 aa).

10 helical membrane-spanning segments follow: residues 7 to 27, 101 to 121, 156 to 176, 375 to 395, 419 to 439, 467 to 487, 512 to 532, 583 to 603, 630 to 650, and 653 to 673; these read IGVA…AFAI, IYLL…TTMV, PRFW…CFIL, LIVG…IAFV, LLKS…FLLF, FYMF…TAFQ, ATFF…GEIL, AAVS…AFVV, VVTA…TKHA, and STPL…HCKN. Positions 718–731 are enriched in basic and acidic residues; sequence RVGEDPEPEEKLES. The segment at 718–761 is disordered; that stretch reads RVGEDPEPEEKLESDMSPPDLVATKRWSWRNTPLPSKDSCREIP.

It belongs to the CSC1 (TC 1.A.17) family.

The protein localises to the membrane. In terms of biological role, acts as an osmosensitive calcium-permeable cation channel. The sequence is that of Hyperosmolality-gated Ca2+ permeable channel 1.6 from Arabidopsis thaliana (Mouse-ear cress).